The chain runs to 753 residues: Polyribonucleotide nucleotidyltransferase (753 aa).

Residues Asp-488 and Asp-494 each coordinate Mg(2+). The KH domain maps to 555 to 614; it reads PRLLRTKISPDKIGALIGPGGKNIRGIQETTGAVIEVDDEGTVLVASSNKESAQEAMRQV. One can recognise an S1 motif domain in the interval 624–692; it reads GKIYDGTVSS…EHDRVKLSRR (69 aa). The segment covering 698–719 has biased composition (acidic residues); it reads LGEEDPLAVEGEGGGDSEGGGD. The tract at residues 698 to 753 is disordered; sequence LGEEDPLAVEGEGGGDSEGGGDGEDRPRRRRGGSGGGGGGGRGRGPRRSGGGRDRD. Over residues 730 to 740 the composition is skewed to gly residues; that stretch reads GSGGGGGGGRG.

The protein belongs to the polyribonucleotide nucleotidyltransferase family. Mg(2+) is required as a cofactor.

It is found in the cytoplasm. The catalysed reaction is RNA(n+1) + phosphate = RNA(n) + a ribonucleoside 5'-diphosphate. In terms of biological role, involved in mRNA degradation. Catalyzes the phosphorolysis of single-stranded polyribonucleotides processively in the 3'- to 5'-direction. This Rhodopirellula baltica (strain DSM 10527 / NCIMB 13988 / SH1) protein is Polyribonucleotide nucleotidyltransferase.